A 161-amino-acid polypeptide reads, in one-letter code: Calcium-binding protein CML24 (161 aa).

EF-hand domains lie at 13-48 (GSMDDIKKVFQRFDKNGDGKISVDELKEVIRALSPT), 49-84 (ASPEETVTMMKQFDLDGNGFIDLDEFVALFQIGIGG), 90-125 (NDVSDLKEAFELYDLDGNGRISAKELHSVMKNLGEK), and 126-161 (CSVQDCKKMISKVDIDGDGCVNFDEFKKMMSNGGGA). Residues aspartate 26, asparagine 28, aspartate 30, lysine 32, glutamate 37, aspartate 62, aspartate 64, asparagine 66, glutamate 73, aspartate 103, aspartate 105, asparagine 107, arginine 109, glutamate 114, aspartate 139, aspartate 141, aspartate 143, cysteine 145, and glutamate 150 each contribute to the Ca(2+) site.

As to expression, expressed in seed coat, seedling radical, cotyledons, hypocotyl, shoot apex and elongating root. Expressed in the vasculature of cotyledons, leaves and roots. Highly expressed in guard cells, trichomes and hydathodes. Expressed in inflorescence stem branch points, silique abscission zone, young and mature styles and stigmatic papillae, mature anthers and developing seed.

In terms of biological role, calcium-binding protein that may positively regulate abscisic acid (ABA) inhibition of germination and seedling development. May be required for photoperiod-induced flowering and function in ion homeostasis. The sequence is that of Calcium-binding protein CML24 (CML24) from Arabidopsis thaliana (Mouse-ear cress).